We begin with the raw amino-acid sequence, 514 residues long: MAMAAAAAVASQGLVAASTQQQKKTSAKLSCNAAPVFSGKSFLRVKSGSNGAVRVRNVGVRCEAQAIERESVKADTGSGREEDAFSGLKQVCAVLGTQWGDEGKGKLVDILAQRFDVVARCQGGANAGHTIYNDKGEKFALHLVPSGILNEKTTCVVGNGVVIHLPGFFKEIDNLESKGVNTSGRLLVSDRAHLLFNLHQEVDGLREAELAGQMIGTTKRGIGPCYASKAIRNGIRVGDLRHLDTFREKLDILFRDAAARFKGFEYSAAAVDAEMEMYVKYAERLEHYIVDTVDYVNTAYAEGKRILIEGGQATMLDIDFGTYPFVTSSNPSVGGICTGLGMAPNRLGDIVGVAKAYTTRVGSGPYPTELFGEEGEELRKAGFEWGTTTGRPRRCGWLDIVALNFACTINGFTAINLTKLDVLSGLPEVKLGVAYRTQSGEKLRSFPADLSILEQVEVEYETLEAWKEDITKVRSYAELPVAAQKYVERIEELIGLPCQYIGVGPGRDALIVKQ.

A chloroplast-targeting transit peptide spans 1–73 (MAMAAAAAVA…AQAIERESVK (73 aa)). GTP-binding positions include 100–106 (GDEGKGK) and 128–130 (GHT). The active-site Proton acceptor is the aspartate 101. Mg(2+)-binding residues include aspartate 101 and glycine 128. IMP contacts are provided by residues 101–104 (DEGK), 126–129 (NAGH), threonine 218, arginine 232, glutamine 312, threonine 327, and arginine 391. The active-site Proton donor is the histidine 129. 387–393 (TTTGRPR) provides a ligand contact to substrate. GTP is bound by residues arginine 393, 419 to 421 (KLD), and 502 to 504 (GVG).

It belongs to the adenylosuccinate synthetase family. As to quaternary structure, homodimer. Mg(2+) serves as cofactor.

It localises to the plastid. It is found in the chloroplast. It carries out the reaction IMP + L-aspartate + GTP = N(6)-(1,2-dicarboxyethyl)-AMP + GDP + phosphate + 2 H(+). It functions in the pathway purine metabolism; AMP biosynthesis via de novo pathway; AMP from IMP: step 1/2. Plays an important role in the de novo pathway and in the salvage pathway of purine nucleotide biosynthesis. Catalyzes the first committed step in the biosynthesis of AMP from IMP. The protein is Adenylosuccinate synthetase 1, chloroplastic of Physcomitrium patens (Spreading-leaved earth moss).